The primary structure comprises 185 residues: Elongation factor P (185 aa).

Belongs to the elongation factor P family.

The protein resides in the cytoplasm. The protein operates within protein biosynthesis; polypeptide chain elongation. Involved in peptide bond synthesis. Stimulates efficient translation and peptide-bond synthesis on native or reconstituted 70S ribosomes in vitro. Probably functions indirectly by altering the affinity of the ribosome for aminoacyl-tRNA, thus increasing their reactivity as acceptors for peptidyl transferase. This chain is Elongation factor P, found in Streptococcus pyogenes serotype M4 (strain MGAS10750).